The following is a 369-amino-acid chain: 4-hydroxy-3-methylbut-2-en-1-yl diphosphate synthase (flavodoxin) (369 aa).

Cys-270, Cys-273, Cys-305, and Glu-312 together coordinate [4Fe-4S] cluster.

The protein belongs to the IspG family. The cofactor is [4Fe-4S] cluster.

The enzyme catalyses (2E)-4-hydroxy-3-methylbut-2-enyl diphosphate + oxidized [flavodoxin] + H2O + 2 H(+) = 2-C-methyl-D-erythritol 2,4-cyclic diphosphate + reduced [flavodoxin]. The protein operates within isoprenoid biosynthesis; isopentenyl diphosphate biosynthesis via DXP pathway; isopentenyl diphosphate from 1-deoxy-D-xylulose 5-phosphate: step 5/6. Converts 2C-methyl-D-erythritol 2,4-cyclodiphosphate (ME-2,4cPP) into 1-hydroxy-2-methyl-2-(E)-butenyl 4-diphosphate. The polypeptide is 4-hydroxy-3-methylbut-2-en-1-yl diphosphate synthase (flavodoxin) (Pseudomonas fluorescens (strain ATCC BAA-477 / NRRL B-23932 / Pf-5)).